The sequence spans 499 residues: Glycerol kinase (499 aa).

Residue T17 participates in ADP binding. The ATP site is built by T17, T18, and S19. Residue T17 participates in sn-glycerol 3-phosphate binding. An ADP-binding site is contributed by R21. Sn-glycerol 3-phosphate is bound by residues R87, E88, Y139, and D243. Residues R87, E88, Y139, D243, and Q244 each coordinate glycerol. ADP contacts are provided by T265 and G308. ATP contacts are provided by T265, G308, Q312, and G409. G409 and N413 together coordinate ADP.

It belongs to the FGGY kinase family.

The catalysed reaction is glycerol + ATP = sn-glycerol 3-phosphate + ADP + H(+). The protein operates within polyol metabolism; glycerol degradation via glycerol kinase pathway; sn-glycerol 3-phosphate from glycerol: step 1/1. Inhibited by fructose 1,6-bisphosphate (FBP). Its function is as follows. Key enzyme in the regulation of glycerol uptake and metabolism. Catalyzes the phosphorylation of glycerol to yield sn-glycerol 3-phosphate. This chain is Glycerol kinase, found in Pseudomonas putida (strain ATCC 700007 / DSM 6899 / JCM 31910 / BCRC 17059 / LMG 24140 / F1).